The following is a 758-amino-acid chain: Vitamin K-dependent gamma-carboxylase (758 aa).

The disordered stretch occupies residues 1–34; the sequence is MAVSARPARAPRGPDKVKKDKAAQTSGPRQGSQM. An N-acetylalanine modification is found at Ala-2. Over 2–60 the chain is Cytoplasmic; it reads AVSARPARAPRGPDKVKKDKAAQTSGPRQGSQMGKLLGFEWTDVSSWERLVTLLNRPTD. The span at 12-22 shows a compositional bias: basic and acidic residues; that stretch reads RGPDKVKKDKA. Over residues 23–33 the composition is skewed to polar residues; that stretch reads AQTSGPRQGSQ. The chain crosses the membrane as a helical span at residues 61–81; that stretch reads PASLAVFRFLFGLMMVLDIPQ. Residues 82-113 lie on the Lumenal side of the membrane; it reads ERGLSSLDRRYLDGLEVCRFPLLDALQPLPLD. Cys-99 and Cys-450 are disulfide-bonded. Residues 114–134 form a helical membrane-spanning segment; it reads WMYLVYTIMFLGALGMMLGLC. Topologically, residues 135–136 are cytoplasmic; that stretch reads YR. The chain crosses the membrane as a helical span at residues 137–157; that stretch reads ISCVLFLLPYWYVFLLDKTSW. The Lumenal portion of the chain corresponds to 158 to 292; that stretch reads NNHSYLYGLL…VSYFHCMNSQ (135 aa). A helical transmembrane segment spans residues 293–313; sequence LFSIGMFPYVMLASSPLFCSP. The Cytoplasmic portion of the chain corresponds to 314–361; the sequence is EWPRKLVAHCPKKLQELLPLRTAPQPSTSCMYKRSRARGSQKPGLRHQ. A helical membrane pass occupies residues 362-382; that stretch reads LSTAFTLLYLLEQLFLPYSHF. Residues 383-758 are Lumenal-facing; the sequence is LTQGYNNWTN…PDSHPVHSEF (376 aa). Positions 726-758 are disordered; that stretch reads RPFEPAGEPSPVNTDSSNPNPPEPDSHPVHSEF. The segment covering 749 to 758 has biased composition (basic and acidic residues); that stretch reads PDSHPVHSEF.

It belongs to the vitamin K-dependent gamma-carboxylase family. As to quaternary structure, monomer. May interact with CALU.

The protein resides in the endoplasmic reticulum membrane. It carries out the reaction 4-carboxy-L-glutamyl-[protein] + 2,3-epoxyphylloquinone + H2O + H(+) = phylloquinol + L-glutamyl-[protein] + CO2 + O2. In terms of biological role, mediates the vitamin K-dependent carboxylation of glutamate residues to calcium-binding gamma-carboxyglutamate (Gla) residues with the concomitant conversion of the reduced hydroquinone form of vitamin K to vitamin K epoxide. Catalyzes gamma-carboxylation of various proteins, such as blood coagulation factors (F2, F7, F9 and F10), osteocalcin (BGLAP) or matrix Gla protein (MGP). The polypeptide is Vitamin K-dependent gamma-carboxylase (GGCX) (Ovis aries (Sheep)).